The following is a 419-amino-acid chain: D-inositol 3-phosphate glycosyltransferase (419 aa).

H9 contacts 1D-myo-inositol 3-phosphate. UDP-N-acetyl-alpha-D-glucosamine-binding positions include 15 to 16 (QP) and G23. 1D-myo-inositol 3-phosphate contacts are provided by residues 20 to 25 (DAGGMN), K78, Y110, T134, and R154. 3 residues coordinate UDP-N-acetyl-alpha-D-glucosamine: R231, K236, and R295. Y304, R305, and A307 together coordinate Mg(2+). Residues E317 and E325 each contribute to the UDP-N-acetyl-alpha-D-glucosamine site. T331 provides a ligand contact to Mg(2+).

It belongs to the glycosyltransferase group 1 family. MshA subfamily. As to quaternary structure, homodimer.

The catalysed reaction is 1D-myo-inositol 3-phosphate + UDP-N-acetyl-alpha-D-glucosamine = 1D-myo-inositol 2-acetamido-2-deoxy-alpha-D-glucopyranoside 3-phosphate + UDP + H(+). Catalyzes the transfer of a N-acetyl-glucosamine moiety to 1D-myo-inositol 3-phosphate to produce 1D-myo-inositol 2-acetamido-2-deoxy-glucopyranoside 3-phosphate in the mycothiol biosynthesis pathway. In Corynebacterium jeikeium (strain K411), this protein is D-inositol 3-phosphate glycosyltransferase.